We begin with the raw amino-acid sequence, 465 residues long: 6-phospho-beta-glucosidase GmuD (465 aa).

E170 functions as the Proton donor in the catalytic mechanism. E368 acts as the Nucleophile in catalysis.

The protein belongs to the glycosyl hydrolase 1 family.

The enzyme catalyses 6-phospho-beta-D-glucosyl-(1-&gt;4)-D-glucose + H2O = D-glucose 6-phosphate + D-glucose. In terms of biological role, phospho-beta-D-glucosidase that seems to be involved in the degradation of glucomannan. Is also capable of hydrolyzing aryl-phospho-beta-D-glucosides, although very weakly, and plays only a minor role, if any, in the degradation of these substrates in vivo. The chain is 6-phospho-beta-glucosidase GmuD (gmuD) from Bacillus subtilis (strain 168).